A 161-amino-acid polypeptide reads, in one-letter code: Large ribosomal subunit protein bL17 (161 aa).

A disordered region spans residues 126-161 (KVAKKATRTRRSKKTTEAAPAAEVPATEEPKAESAE). Over residues 129–138 (KKATRTRRSK) the composition is skewed to basic residues. Residues 142–152 (EAAPAAEVPAT) are compositionally biased toward low complexity.

This sequence belongs to the bacterial ribosomal protein bL17 family. As to quaternary structure, part of the 50S ribosomal subunit. Contacts protein L32.

This is Large ribosomal subunit protein bL17 from Bacteroides fragilis (strain ATCC 25285 / DSM 2151 / CCUG 4856 / JCM 11019 / LMG 10263 / NCTC 9343 / Onslow / VPI 2553 / EN-2).